The following is a 359-amino-acid chain: Protein-glutamate methylesterase/protein-glutamine glutaminase 2 (359 aa).

Positions 6-123 constitute a Response regulatory domain; sequence KVMIVDDSAL…KSFLEDASND (118 aa). D57 carries the 4-aspartylphosphate modification. Positions 167–359 constitute a CheB-type methylesterase domain; the sequence is ERTTDQLVAI…GAIVGYGKSC (193 aa). Catalysis depends on residues S179, H205, and D301.

The protein belongs to the CheB family. Post-translationally, phosphorylated by CheA. Phosphorylation of the N-terminal regulatory domain activates the methylesterase activity.

Its subcellular location is the cytoplasm. The enzyme catalyses [protein]-L-glutamate 5-O-methyl ester + H2O = L-glutamyl-[protein] + methanol + H(+). The catalysed reaction is L-glutaminyl-[protein] + H2O = L-glutamyl-[protein] + NH4(+). In terms of biological role, involved in chemotaxis. Part of a chemotaxis signal transduction system that modulates chemotaxis in response to various stimuli. Catalyzes the demethylation of specific methylglutamate residues introduced into the chemoreceptors (methyl-accepting chemotaxis proteins or MCP) by CheR. Also mediates the irreversible deamidation of specific glutamine residues to glutamic acid. This Dechloromonas aromatica (strain RCB) protein is Protein-glutamate methylesterase/protein-glutamine glutaminase 2.